Reading from the N-terminus, the 318-residue chain is Galactose-1-phosphate uridylyltransferase (318 aa).

Residues C32, C35, and H90 each coordinate Zn(2+). UDP-alpha-D-glucose is bound at residue N130. Position 141 (H141) interacts with Zn(2+). The active-site Tele-UMP-histidine intermediate is H143. Residue Q145 participates in UDP-alpha-D-glucose binding.

The protein belongs to the galactose-1-phosphate uridylyltransferase type 1 family. Zn(2+) is required as a cofactor.

It carries out the reaction alpha-D-galactose 1-phosphate + UDP-alpha-D-glucose = alpha-D-glucose 1-phosphate + UDP-alpha-D-galactose. It functions in the pathway carbohydrate metabolism; galactose metabolism. This chain is Galactose-1-phosphate uridylyltransferase (galT), found in Thermotoga maritima (strain ATCC 43589 / DSM 3109 / JCM 10099 / NBRC 100826 / MSB8).